A 765-amino-acid chain; its full sequence is Cyanobacterial phytochrome A (765 aa).

The chromophore binding domain stretch occupies residues 20-510 (IHLSGQIQPH…RKAIVNIVLR (491 aa)). Residues 152-320 (NLRDFCQIIV…VIFAEISARE (169 aa)) enclose the GAF domain. Cys-259 serves as a coordination point for a tetrapyrrole. Residues 535-748 (VASHDLQEPL…TFYFTIPVGG (214 aa)) enclose the Histidine kinase domain. Position 538 is a phosphohistidine; by autocatalysis (His-538).

The protein in the N-terminal section; belongs to the phytochrome family. Contains one covalently linked tetrapyrrole chromophore.

It carries out the reaction ATP + protein L-histidine = ADP + protein N-phospho-L-histidine.. Its function is as follows. Photoreceptor which exists in two forms that are reversibly interconvertible by light: the R form that absorbs maximally in the red region of the spectrum and the FR form that absorbs maximally in the far-red region. In Nostoc sp. (strain PCC 7120 / SAG 25.82 / UTEX 2576), this protein is Cyanobacterial phytochrome A (aphA).